A 455-amino-acid chain; its full sequence is Phosphomethylpyrimidine synthase (455 aa).

Substrate is bound by residues Asn-80, Met-109, Tyr-139, His-175, Ser-195 to Gly-197, Asp-236 to Arg-239, and Glu-275. Zn(2+) is bound at residue His-279. Tyr-302 is a binding site for substrate. His-343 contributes to the Zn(2+) binding site. [4Fe-4S] cluster is bound by residues Cys-423, Cys-426, and Cys-431.

Belongs to the ThiC family. The cofactor is [4Fe-4S] cluster.

The catalysed reaction is 5-amino-1-(5-phospho-beta-D-ribosyl)imidazole + S-adenosyl-L-methionine = 4-amino-2-methyl-5-(phosphooxymethyl)pyrimidine + CO + 5'-deoxyadenosine + formate + L-methionine + 3 H(+). Its pathway is cofactor biosynthesis; thiamine diphosphate biosynthesis. Its function is as follows. Catalyzes the synthesis of the hydroxymethylpyrimidine phosphate (HMP-P) moiety of thiamine from aminoimidazole ribotide (AIR) in a radical S-adenosyl-L-methionine (SAM)-dependent reaction. The polypeptide is Phosphomethylpyrimidine synthase (Synechococcus sp. (strain JA-3-3Ab) (Cyanobacteria bacterium Yellowstone A-Prime)).